We begin with the raw amino-acid sequence, 354 residues long: Uroporphyrinogen decarboxylase (354 aa).

Substrate contacts are provided by residues 27–31 (RQAGR), Asp77, Tyr154, Thr209, and His327.

This sequence belongs to the uroporphyrinogen decarboxylase family. Homodimer.

Its subcellular location is the cytoplasm. The catalysed reaction is uroporphyrinogen III + 4 H(+) = coproporphyrinogen III + 4 CO2. Its pathway is porphyrin-containing compound metabolism; protoporphyrin-IX biosynthesis; coproporphyrinogen-III from 5-aminolevulinate: step 4/4. Catalyzes the decarboxylation of four acetate groups of uroporphyrinogen-III to yield coproporphyrinogen-III. This Histophilus somni (strain 129Pt) (Haemophilus somnus) protein is Uroporphyrinogen decarboxylase.